The following is a 139-amino-acid chain: von Hippel-Lindau-like protein (139 aa).

The disordered stretch occupies residues M1–P22. Positions S54–L135 are beta-domain.

Belongs to the VHL family. As to quaternary structure, interacts via the beta domain with the ODD domain of HIF1A. This interaction is independent of prolyl hydroxylation of HIF1A. As to expression, abundantly expressed in the placenta.

Functionally, functions as a dominant-negative VHL to serve as a protector of HIFalpha. This Homo sapiens (Human) protein is von Hippel-Lindau-like protein (VHLL).